Here is a 673-residue protein sequence, read N- to C-terminus: DNA topoisomerase 1 (673 aa).

One can recognise a Toprim domain in the interval 1 to 134 (MVAEKPKAAA…ARRMKFSTLA (134 aa)). Residues Glu4 and Asp103 each contribute to the Mg(2+) site. Positions 149–568 (DVEMIEAGMA…MSKKTISKLL (420 aa)) constitute a Topo IA-type catalytic domain. The interaction with DNA stretch occupies residues 189–194 (SAGRVQ). Tyr311 functions as the O-(5'-phospho-DNA)-tyrosine intermediate in the catalytic mechanism. The disordered stretch occupies residues 352–374 (LRPVQGSKDDPAHPAIHPTGEKP). The C4-type zinc-finger motif lies at 595 to 615 (CHLCGRKAVSAVSGYRLCSHH).

It belongs to the type IA topoisomerase family. As to quaternary structure, monomer. The cofactor is Mg(2+).

The enzyme catalyses ATP-independent breakage of single-stranded DNA, followed by passage and rejoining.. In terms of biological role, releases the supercoiling and torsional tension of DNA, which is introduced during the DNA replication and transcription, by transiently cleaving and rejoining one strand of the DNA duplex. Introduces a single-strand break via transesterification at a target site in duplex DNA. The scissile phosphodiester is attacked by the catalytic tyrosine of the enzyme, resulting in the formation of a DNA-(5'-phosphotyrosyl)-enzyme intermediate and the expulsion of a 3'-OH DNA strand. The free DNA strand then undergoes passage around the unbroken strand, thus removing DNA supercoils. Finally, in the religation step, the DNA 3'-OH attacks the covalent intermediate to expel the active-site tyrosine and restore the DNA phosphodiester backbone. The chain is DNA topoisomerase 1 from Aeropyrum pernix (strain ATCC 700893 / DSM 11879 / JCM 9820 / NBRC 100138 / K1).